The chain runs to 213 residues: uncharacterized protein (213 aa).

3 helical membrane-spanning segments follow: residues 26-46, 112-132, and 136-156; these read FINF…GLKV, ASYI…AGIW, and AGLA…SFLI.

It localises to the cell membrane. This is an uncharacterized protein from Haemophilus influenzae (strain ATCC 51907 / DSM 11121 / KW20 / Rd).